Reading from the N-terminus, the 80-residue chain is MIIPWQDIAPDTLENLISEFVLREGTDYGEVEISHQEKVDQIKVLLKNGEAMVVFSELHETVDIQTKARFNPNLTNHNYD.

This sequence belongs to the UPF0270 family.

The sequence is that of UPF0270 protein VFMJ11_0205 from Aliivibrio fischeri (strain MJ11) (Vibrio fischeri).